The sequence spans 216 residues: Hydrogenase-4 component E (216 aa).

The Periplasmic portion of the chain corresponds to 1-3 (MTG). A helical membrane pass occupies residues 4 to 24 (SMIVNNLAGLMMLTSLFVISV). Topologically, residues 25 to 38 (KSYRLSCGFYACQS) are cytoplasmic. The next 2 helical transmembrane spans lie at 39–59 (LVLVSIFATLSCLFAAEQLLI) and 60–80 (WSASAFITKVLLVPLIMTYAA). At 81 to 92 (RNIPQNIPEKAL) the chain is on the cytoplasmic side. Residues 93-113 (FGPAMMALLAALIVLLCAFVV) form a helical membrane-spanning segment. Residues 114–122 (QPVKLPMAT) are Periplasmic-facing. Residues 123–143 (GLKPALAVALGHFLLGLLCIV) form a helical membrane-spanning segment. The Cytoplasmic portion of the chain corresponds to 144-150 (SQRNILR). The helical transmembrane segment at 151-171 (QIFGYCLMENGSHLVLALLAW) threads the bilayer. Topologically, residues 172–175 (RAPE) are periplasmic. The chain crosses the membrane as a helical span at residues 176–196 (LVEIGIATDAIFAVIVMVLLA). Over 197–216 (RKIWRTHGTLDVNNLTALKG) the chain is Cytoplasmic.

The protein resides in the cell inner membrane. The chain is Hydrogenase-4 component E (hyfE) from Escherichia coli O157:H7.